The following is a 151-amino-acid chain: Ribonuclease H (151 aa).

The RNase H type-1 domain occupies Met-1–Glu-141. The Mg(2+) site is built by Asp-9, Glu-47, Asp-69, and Asp-133.

The protein belongs to the RNase H family. In terms of assembly, monomer. Mg(2+) serves as cofactor.

It is found in the cytoplasm. It carries out the reaction Endonucleolytic cleavage to 5'-phosphomonoester.. In terms of biological role, endonuclease that specifically degrades the RNA of RNA-DNA hybrids. This Rhizobium etli (strain ATCC 51251 / DSM 11541 / JCM 21823 / NBRC 15573 / CFN 42) protein is Ribonuclease H.